The sequence spans 198 residues: Imidazoleglycerol-phosphate dehydratase (198 aa).

The protein belongs to the imidazoleglycerol-phosphate dehydratase family.

It is found in the cytoplasm. It carries out the reaction D-erythro-1-(imidazol-4-yl)glycerol 3-phosphate = 3-(imidazol-4-yl)-2-oxopropyl phosphate + H2O. The protein operates within amino-acid biosynthesis; L-histidine biosynthesis; L-histidine from 5-phospho-alpha-D-ribose 1-diphosphate: step 6/9. The polypeptide is Imidazoleglycerol-phosphate dehydratase (Janthinobacterium sp. (strain Marseille) (Minibacterium massiliensis)).